Consider the following 365-residue polypeptide: Histidinol-phosphate aminotransferase (365 aa).

N6-(pyridoxal phosphate)lysine is present on Lys-221.

Belongs to the class-II pyridoxal-phosphate-dependent aminotransferase family. Histidinol-phosphate aminotransferase subfamily. As to quaternary structure, homodimer. It depends on pyridoxal 5'-phosphate as a cofactor.

It carries out the reaction L-histidinol phosphate + 2-oxoglutarate = 3-(imidazol-4-yl)-2-oxopropyl phosphate + L-glutamate. It functions in the pathway amino-acid biosynthesis; L-histidine biosynthesis; L-histidine from 5-phospho-alpha-D-ribose 1-diphosphate: step 7/9. This is Histidinol-phosphate aminotransferase from Nitrobacter hamburgensis (strain DSM 10229 / NCIMB 13809 / X14).